The chain runs to 229 residues: Dihydrofolate reductase (229 aa).

The region spanning 11–227 (SITAVVAATA…VKYIFEMWVL (217 aa)) is the DHFR domain. NADP(+) is bound by residues Ala-17 and 23–29 (GIGLNGG). Residue 37–42 (EMKYFA) participates in substrate binding. 64 to 66 (RKT) is an NADP(+) binding site. Residue Arg-80 participates in substrate binding. Residues 86 to 88 (SGK) and 127 to 134 (GGATLYTS) each bind NADP(+).

Belongs to the dihydrofolate reductase family. As to quaternary structure, monomer.

The enzyme catalyses (6S)-5,6,7,8-tetrahydrofolate + NADP(+) = 7,8-dihydrofolate + NADPH + H(+). Its pathway is cofactor biosynthesis; tetrahydrofolate biosynthesis; 5,6,7,8-tetrahydrofolate from 7,8-dihydrofolate: step 1/1. Key enzyme in folate metabolism. Catalyzes an essential reaction for de novo glycine and purine synthesis, and for DNA precursor synthesis. The protein is Dihydrofolate reductase (DFR1) of Cryptococcus neoformans var. neoformans serotype D (strain JEC21 / ATCC MYA-565) (Filobasidiella neoformans).